Here is a 283-residue protein sequence, read N- to C-terminus: N-terminal Xaa-Pro-Lys N-methyltransferase 2 (283 aa).

Residues glycine 124, arginine 129, aspartate 146, 174–175 (LQ), glutamine 190, and histidine 195 contribute to the S-adenosyl-L-methionine site.

The protein belongs to the methyltransferase superfamily. NTM1 family.

Its subcellular location is the nucleus. It carries out the reaction N-terminal L-alanyl-L-prolyl-L-lysyl-[protein] + S-adenosyl-L-methionine = N-terminal N-methyl-L-alanyl-L-prolyl-L-lysyl-[protein] + S-adenosyl-L-homocysteine + H(+). The enzyme catalyses N-terminal L-prolyl-L-prolyl-L-lysyl-[protein] + S-adenosyl-L-methionine = N-terminal N-methyl-L-prolyl-L-prolyl-L-lysyl-[protein] + S-adenosyl-L-homocysteine + H(+). It catalyses the reaction N-terminal L-seryl-L-prolyl-L-lysyl-[protein] + S-adenosyl-L-methionine = N-terminal N-methyl-L-seryl-L-prolyl-L-lysyl-[protein] + S-adenosyl-L-homocysteine + H(+). Functionally, alpha N-methyltransferase that methylates the N-terminus of target proteins containing the N-terminal motif [Ala/Pro/Ser]-Pro-Lys when the initiator Met is cleaved. Specifically catalyzes monomethylation of exposed alpha-amino group of Ala or Ser residue in the [Ala/Ser]-Pro-Lys motif and Pro in the Pro-Pro-Lys motif. Predominantly functions as a mono-methyltransferase but is also able to di-/tri-methylate the GPKRIA peptide and di-methylate the PPKRIA peptide (in vitro). May activate NTMT1 by priming its substrates for trimethylation. This chain is N-terminal Xaa-Pro-Lys N-methyltransferase 2, found in Homo sapiens (Human).